Consider the following 488-residue polypeptide: 3-octaprenyl-4-hydroxybenzoate carboxy-lyase (488 aa).

Asn172 contacts Mn(2+). Prenylated FMN contacts are provided by residues 175 to 177 (IYR), 189 to 191 (RWL), and 194 to 195 (RG). Glu238 is a Mn(2+) binding site. Catalysis depends on Asp287, which acts as the Proton donor.

Belongs to the UbiD family. Homohexamer. Prenylated FMN serves as cofactor. Requires Mn(2+) as cofactor.

The protein resides in the cell membrane. It carries out the reaction a 4-hydroxy-3-(all-trans-polyprenyl)benzoate + H(+) = a 2-(all-trans-polyprenyl)phenol + CO2. Its pathway is cofactor biosynthesis; ubiquinone biosynthesis. In terms of biological role, catalyzes the decarboxylation of 3-octaprenyl-4-hydroxy benzoate to 2-octaprenylphenol, an intermediate step in ubiquinone biosynthesis. The polypeptide is 3-octaprenyl-4-hydroxybenzoate carboxy-lyase (Ectopseudomonas mendocina (strain ymp) (Pseudomonas mendocina)).